A 2254-amino-acid polypeptide reads, in one-letter code: Genome polyprotein (2254 aa).

Residues glutamine 438–arginine 592 form the SF3 helicase domain. Residue glycine 464–threonine 471 coordinates ATP. Tyrosine 956 is subject to O-(5'-phospho-RNA)-tyrosine. Residues glycine 1041–lysine 1196 enclose the Peptidase C24 domain. Residues histidine 1078, aspartate 1099, and cysteine 1163 each act as for 3CLpro activity in the active site. The 126-residue stretch at arginine 1434 to methionine 1559 folds into the RdRp catalytic domain. The interval proline 1714 to methionine 1742 is disordered. Positions serine 1719–arginine 1734 are enriched in polar residues.

Homodimer. Homomultimer. As to quaternary structure, interacts with host IEF4E; this interaction plays a role in translation of viral proteins. Post-translationally, specific enzymatic cleavages in vivo yield mature proteins. Pro-Pol is first autocatalytically cleaved, then processes the whole polyprotein. VPg is uridylylated by the polymerase and is covalently attached to the 5'-end of the polyadenylated genomic and subgenomic RNAs. This uridylylated form acts as a nucleotide-peptide primer for the polymerase.

It localises to the virion. The protein resides in the host cytoplasm. The enzyme catalyses a ribonucleoside 5'-triphosphate + H2O = a ribonucleoside 5'-diphosphate + phosphate + H(+). The catalysed reaction is RNA(n) + a ribonucleoside 5'-triphosphate = RNA(n+1) + diphosphate. It catalyses the reaction Endopeptidase with a preference for cleavage when the P1 position is occupied by Glu-|-Xaa and the P1' position is occupied by Gly-|-Yaa.. Its function is as follows. Together with NTPase and NS4, initiates the formation of the replication complex. Induces the proliferation of the host smooth ER membranes forming long tubular structures. These remodeled membranes probably form the viral factories that contain the replication complex. Functionally, displays NTPase activity, but no helicase activity. Induces the formation of convoluted membranes derived from the host ER. These remodeled membranes probably form the viral factories that contain the replication complex. Together with NS2 and NS4, initiates the formation of the replication complex. Probable key protein responsible for the formation of membrane alterations by the virus. Induces the formation of convoluted membranes derived from the host ER. These remodeled membranes probably form the viral factories that contain the replication complex. Together with NS2 and NTPase, initiates the formation of the replication complex. In terms of biological role, viral genome-linked protein is covalently linked to the 5'-end of the positive-strand, negative-strand genomic RNAs and subgenomic RNA. Acts as a genome-linked replication primer. May recruit ribosome to viral RNA thereby promoting viral proteins translation. Interacts with host translation initiation complex to allow the translation of viral proteins. Its function is as follows. Protease-polymerase p76 processes the polyprotein: Pro-Pol is first released by autocleavage, then all other proteins are cleaved. Cleaves host translation initiation factor eIF4G1, eIF4G2 and PABP1 thereby inducing a shutdown of host protein synthesis. This shutdown may not prevent viral mRNA from being translated since viral Vpg replaces the cap. It is also an RNA-directed RNA polymerase which replicates genomic and antigenomic viral RNA by recognizing specific signals. Also transcribes a subgenomic mRNA by initiating RNA synthesis internally on antigenomic RNA. This sgRNA codes for structural proteins. Catalyzes the covalent attachment VPg with viral RNAs. Functionally, capsid protein self assembles to form an icosahedral capsid with a T=3 symmetry, about 38 nm in diameter, and consisting of 180 capsid proteins. The capsid encapsulate the genomic RNA and VP2 proteins. Attaches virion to target cells, inducing endocytosis of the viral particle. Acidification of the endosome induces conformational change of capsid protein thereby injecting virus genomic RNA into host cytoplasm. This chain is Genome polyprotein, found in Porcine enteric sapovirus (isolate Swine/United States/Cowden/1980) (Sw/SV/Cowden/1980/US).